Reading from the N-terminus, the 347-residue chain is MDCSFSADIQTRIDNKTKPLGALGVLEKVALQLALIQSQDQAQAVEEIVIRKPTMLVFAGDHGVAKEGISIAPSEVTQQMVANFLAGGAAINCFCDVNQIEFKVIDCGMLAPIEVMVPEFKSHPNLIEQRLGNGTANFSKQAAMSSEQVALGLEYGARVAQSTIYSGSNLLMFGEMGIGNTSSASALLAALSPLEVNHCVGLGTGINSEQLSRKLKLVAQGVSRCRGLDAKAVLSQVGGFEIVQMVGAFLEAKRLKTPVLVDGFIVSVAAYVATLLDEETRDYMLFAHRSEENGHKFVLESLKAEPLLDLGLRLGEGTGAALALPLLKAAAQFYNKMASFESAGVTV.

The active-site Proton acceptor is Glu316.

It belongs to the CobT family.

It carries out the reaction 5,6-dimethylbenzimidazole + nicotinate beta-D-ribonucleotide = alpha-ribazole 5'-phosphate + nicotinate + H(+). It participates in nucleoside biosynthesis; alpha-ribazole biosynthesis; alpha-ribazole from 5,6-dimethylbenzimidazole: step 1/2. In terms of biological role, catalyzes the synthesis of alpha-ribazole-5'-phosphate from nicotinate mononucleotide (NAMN) and 5,6-dimethylbenzimidazole (DMB). This chain is Nicotinate-nucleotide--dimethylbenzimidazole phosphoribosyltransferase, found in Vibrio parahaemolyticus serotype O3:K6 (strain RIMD 2210633).